Reading from the N-terminus, the 156-residue chain is ATP synthase subunit b (156 aa).

A helical membrane pass occupies residues 7–29; that stretch reads LFAQMVVFLVLAWFTMKFVWPPL.

This sequence belongs to the ATPase B chain family. In terms of assembly, F-type ATPases have 2 components, F(1) - the catalytic core - and F(0) - the membrane proton channel. F(1) has five subunits: alpha(3), beta(3), gamma(1), delta(1), epsilon(1). F(0) has three main subunits: a(1), b(2) and c(10-14). The alpha and beta chains form an alternating ring which encloses part of the gamma chain. F(1) is attached to F(0) by a central stalk formed by the gamma and epsilon chains, while a peripheral stalk is formed by the delta and b chains.

Its subcellular location is the cell inner membrane. In terms of biological role, f(1)F(0) ATP synthase produces ATP from ADP in the presence of a proton or sodium gradient. F-type ATPases consist of two structural domains, F(1) containing the extramembraneous catalytic core and F(0) containing the membrane proton channel, linked together by a central stalk and a peripheral stalk. During catalysis, ATP synthesis in the catalytic domain of F(1) is coupled via a rotary mechanism of the central stalk subunits to proton translocation. Its function is as follows. Component of the F(0) channel, it forms part of the peripheral stalk, linking F(1) to F(0). In Burkholderia multivorans (strain ATCC 17616 / 249), this protein is ATP synthase subunit b.